The chain runs to 961 residues: Aconitate hydratase A (961 aa).

Residues Cys-499, Cys-565, and Cys-568 each contribute to the [4Fe-4S] cluster site.

It belongs to the aconitase/IPM isomerase family. Monomer. The cofactor is [4Fe-4S] cluster.

The enzyme catalyses citrate = D-threo-isocitrate. It catalyses the reaction (2S,3R)-3-hydroxybutane-1,2,3-tricarboxylate = 2-methyl-cis-aconitate + H2O. It participates in carbohydrate metabolism; tricarboxylic acid cycle; isocitrate from oxaloacetate: step 2/2. It functions in the pathway organic acid metabolism; propanoate degradation. In terms of biological role, involved in the catabolism of short chain fatty acids (SCFA) via the tricarboxylic acid (TCA)(acetyl degradation route) and probably via the 2-methylcitrate cycle I (propionate degradation route). Catalyzes the reversible isomerization of citrate to isocitrate via cis-aconitate. The apo form of AcnA functions as a RNA-binding regulatory protein. Could catalyze the hydration of 2-methyl-cis-aconitate to yield (2R,3S)-2-methylisocitrate. This is Aconitate hydratase A (acn) from Mycobacterium avium.